We begin with the raw amino-acid sequence, 185 residues long: Large ribosomal subunit protein uL5 (185 aa).

Belongs to the universal ribosomal protein uL5 family. As to quaternary structure, part of the 50S ribosomal subunit; part of the 5S rRNA/L5/L18/L25 subcomplex. Contacts the 5S rRNA and the P site tRNA. Forms a bridge to the 30S subunit in the 70S ribosome.

In terms of biological role, this is one of the proteins that bind and probably mediate the attachment of the 5S RNA into the large ribosomal subunit, where it forms part of the central protuberance. In the 70S ribosome it contacts protein S13 of the 30S subunit (bridge B1b), connecting the 2 subunits; this bridge is implicated in subunit movement. Contacts the P site tRNA; the 5S rRNA and some of its associated proteins might help stabilize positioning of ribosome-bound tRNAs. This is Large ribosomal subunit protein uL5 from Bradyrhizobium sp. (strain BTAi1 / ATCC BAA-1182).